Reading from the N-terminus, the 272-residue chain is F-actin-capping protein subunit beta (272 aa).

It belongs to the F-actin-capping protein beta subunit family. As to quaternary structure, component of the F-actin capping complex, composed of a heterodimer of an alpha and a beta subunit.

The protein resides in the cytoplasm. It is found in the cytoskeleton. F-actin-capping proteins bind in a Ca(2+)-independent manner to the fast growing ends of actin filaments (barbed end) thereby blocking the exchange of subunits at these ends. Unlike other capping proteins (such as gelsolin and severin), these proteins do not sever actin filaments. This Dictyostelium discoideum (Social amoeba) protein is F-actin-capping protein subunit beta (acpA).